The primary structure comprises 312 residues: DNA-directed RNA polymerase subunit alpha (312 aa).

The interval 1 to 226 is alpha N-terminal domain (alpha-NTD); sequence MIEFEKPKIT…DHLNLFVDLS (226 aa). Residues 243 to 312 form an alpha C-terminal domain (alpha-CTD) region; it reads TERVLDKIIE…ELGLSLKKRK (70 aa).

Belongs to the RNA polymerase alpha chain family. As to quaternary structure, homodimer. The RNAP catalytic core consists of 2 alpha, 1 beta, 1 beta' and 1 omega subunit. When a sigma factor is associated with the core the holoenzyme is formed, which can initiate transcription.

It carries out the reaction RNA(n) + a ribonucleoside 5'-triphosphate = RNA(n+1) + diphosphate. In terms of biological role, DNA-dependent RNA polymerase catalyzes the transcription of DNA into RNA using the four ribonucleoside triphosphates as substrates. The protein is DNA-directed RNA polymerase subunit alpha of Lactococcus lactis subsp. cremoris (strain MG1363).